The chain runs to 250 residues: 3-deoxy-manno-octulosonate cytidylyltransferase (250 aa).

This sequence belongs to the KdsB family.

It localises to the cytoplasm. It carries out the reaction 3-deoxy-alpha-D-manno-oct-2-ulosonate + CTP = CMP-3-deoxy-beta-D-manno-octulosonate + diphosphate. It participates in nucleotide-sugar biosynthesis; CMP-3-deoxy-D-manno-octulosonate biosynthesis; CMP-3-deoxy-D-manno-octulosonate from 3-deoxy-D-manno-octulosonate and CTP: step 1/1. Its pathway is bacterial outer membrane biogenesis; lipopolysaccharide biosynthesis. Functionally, activates KDO (a required 8-carbon sugar) for incorporation into bacterial lipopolysaccharide in Gram-negative bacteria. This Francisella tularensis subsp. novicida (strain U112) protein is 3-deoxy-manno-octulosonate cytidylyltransferase.